Consider the following 705-residue polypeptide: Translation initiation factor IF-2 (705 aa).

The segment at 40 to 124 (DDQIKALDKK…QPAAPKEIPS (85 aa)) is disordered. Over residues 41 to 58 (DQIKALDKKFKKEQKNDN) the composition is skewed to basic and acidic residues. Positions 59-77 (KQSTQNNHQKSNNQNQNKG) are enriched in low complexity. Residues 94–108 (KGNKKNNRNNKKNNK) are compositionally biased toward basic residues. A tr-type G domain is found at 207–376 (ERPAVVTIMG…GLVAEVQELK (170 aa)). Residues 216 to 223 (GHVDHGKT) are G1. 216 to 223 (GHVDHGKT) provides a ligand contact to GTP. A G2 region spans residues 241–245 (GITQH). Residues 262–265 (DTPG) are G3. GTP is bound by residues 262-266 (DTPGH) and 316-319 (NKID). The segment at 316 to 319 (NKID) is G4. The interval 352–354 (SAL) is G5.

The protein belongs to the TRAFAC class translation factor GTPase superfamily. Classic translation factor GTPase family. IF-2 subfamily.

The protein localises to the cytoplasm. Functionally, one of the essential components for the initiation of protein synthesis. Protects formylmethionyl-tRNA from spontaneous hydrolysis and promotes its binding to the 30S ribosomal subunits. Also involved in the hydrolysis of GTP during the formation of the 70S ribosomal complex. This Staphylococcus aureus (strain MRSA252) protein is Translation initiation factor IF-2.